The sequence spans 635 residues: Probable potassium transport system protein Kup (635 aa).

12 helical membrane passes run 22–42 (LVIGAIGVVFGDIGTSPLYTL), 59–79 (VLGILSLVFWALMLVVTLKYV), 111–131 (MYVVGILGIFGASLFFGDGVI), 148–168 (APKLEAFVVPITLVVLGMLFL), 180–200 (AFGPITLVWFFALGAIGVYNM), 216–236 (VLFFVEHNWHAVFVLGAVVLA), 259–279 (WQFVVLPMLTLTYLGQGALVL), 297–317 (ALYPMIVLATAATVIASQALI), 349–369 (IYVPAVNWCLLLAVAVAVVGF), 378–398 (AYGVSVTGTMLITTVLMVIYA), 404–424 (VPAPLLWLFALVFLAVDCAFF), and 428–448 (IIKFLDGAWFPLLLGLILFTL).

It belongs to the HAK/KUP transporter (TC 2.A.72) family.

Its subcellular location is the cell inner membrane. The enzyme catalyses K(+)(in) + H(+)(in) = K(+)(out) + H(+)(out). Functionally, transport of potassium into the cell. Likely operates as a K(+):H(+) symporter. This Xanthomonas oryzae pv. oryzae (strain KACC10331 / KXO85) protein is Probable potassium transport system protein Kup.